A 122-amino-acid polypeptide reads, in one-letter code: MILGIGVDLVCTRRIQALIAKYGNKFTNRIFSEKEILDSLKYRDEYARARHFAKRFAAKEAYVKALGLGFGRGVEAKDISVHNDPYGQPMISLEGGALRNGHVKLSMSDDGDYAIAFVTLHT.

Mg(2+) is bound by residues aspartate 8 and glutamate 60.

This sequence belongs to the P-Pant transferase superfamily. AcpS family. Mg(2+) serves as cofactor.

Its subcellular location is the cytoplasm. The catalysed reaction is apo-[ACP] + CoA = holo-[ACP] + adenosine 3',5'-bisphosphate + H(+). Functionally, transfers the 4'-phosphopantetheine moiety from coenzyme A to a Ser of acyl-carrier-protein. The polypeptide is Holo-[acyl-carrier-protein] synthase (Anaplasma phagocytophilum (strain HZ)).